A 67-amino-acid polypeptide reads, in one-letter code: Large ribosomal subunit protein uL29 (67 aa).

Belongs to the universal ribosomal protein uL29 family.

This is Large ribosomal subunit protein uL29 from Exiguobacterium sp. (strain ATCC BAA-1283 / AT1b).